Consider the following 436-residue polypeptide: Acetyl-CoA decarbonylase/synthase complex subunit delta (436 aa).

It belongs to the CdhD family. Heterodimer of delta and gamma chains. The ACDS complex is made up of alpha, epsilon, beta, gamma and delta chains with a probable stoichiometry of (alpha(2)epsilon(2))(4)-beta(8)-(gamma(1)delta(1))(8).

Its pathway is one-carbon metabolism; methanogenesis from acetate. Its function is as follows. Part of a complex that catalyzes the reversible cleavage of acetyl-CoA, allowing growth on acetate as sole source of carbon and energy. Probably maintains the overall quaternary structure of the ACDS complex. The sequence is that of Acetyl-CoA decarbonylase/synthase complex subunit delta from Methanosarcina mazei (strain ATCC BAA-159 / DSM 3647 / Goe1 / Go1 / JCM 11833 / OCM 88) (Methanosarcina frisia).